Here is a 390-residue protein sequence, read N- to C-terminus: tRNA(Met) cytidine acetate ligase (390 aa).

ATP is bound by residues 7–20, Gly101, Asn162, and Arg187; that span reads VVEY…HKLH.

This sequence belongs to the TmcAL family.

It is found in the cytoplasm. It catalyses the reaction cytidine(34) in elongator tRNA(Met) + acetate + ATP = N(4)-acetylcytidine(34) in elongator tRNA(Met) + AMP + diphosphate. Its function is as follows. Catalyzes the formation of N(4)-acetylcytidine (ac(4)C) at the wobble position of elongator tRNA(Met), using acetate and ATP as substrates. First activates an acetate ion to form acetyladenylate (Ac-AMP) and then transfers the acetyl group to tRNA to form ac(4)C34. The protein is tRNA(Met) cytidine acetate ligase of Listeria monocytogenes serovar 1/2a (strain ATCC BAA-679 / EGD-e).